The chain runs to 546 residues: Chaperonin GroEL (546 aa).

ATP-binding positions include 29-32 (TLGP), K50, 86-90 (DGTTT), G414, and D495. The disordered stretch occupies residues 526–546 (AKEGAPAGGGMPDMGGMGGMM). Residues 531 to 546 (PAGGGMPDMGGMGGMM) show a composition bias toward gly residues.

The protein belongs to the chaperonin (HSP60) family. As to quaternary structure, forms a cylinder of 14 subunits composed of two heptameric rings stacked back-to-back. Interacts with the co-chaperonin GroES.

The protein resides in the cytoplasm. The catalysed reaction is ATP + H2O + a folded polypeptide = ADP + phosphate + an unfolded polypeptide.. Functionally, together with its co-chaperonin GroES, plays an essential role in assisting protein folding. The GroEL-GroES system forms a nano-cage that allows encapsulation of the non-native substrate proteins and provides a physical environment optimized to promote and accelerate protein folding. In Jannaschia sp. (strain CCS1), this protein is Chaperonin GroEL.